A 202-amino-acid chain; its full sequence is Inner membrane-spanning protein YciB (202 aa).

6 helical membrane passes run 3 to 23, 46 to 66, 73 to 93, 100 to 120, 145 to 165, and 173 to 193; these read ILFD…AGGN, ILLA…WVWM, TMLW…LFFH, WKPT…AVIF, LAWA…AYNF, and FKLF…GFYL.

Belongs to the YciB family.

The protein localises to the cell inner membrane. Functionally, plays a role in cell envelope biogenesis, maintenance of cell envelope integrity and membrane homeostasis. The sequence is that of Inner membrane-spanning protein YciB from Aromatoleum aromaticum (strain DSM 19018 / LMG 30748 / EbN1) (Azoarcus sp. (strain EbN1)).